Reading from the N-terminus, the 250-residue chain is MSAAASPASERGWKSEKLDEAQALARSCAARRPDFQPCDGLSICATHSHGKCFKLHWCCHLGWCHCKYMYQPMTPVEQLPSTEIPARPREPTNTIQISVSLTEHFLKFASVFQPPLPPDSPRYCMISDLFIDNYQVKCINGKMCYVQKQPAPHSHRMSPEEVSAHDALISKESNTPKIDHCSSPSSSEDSGINAIGAHYVESCDEDTEEGAELSSEEDYSPESSWEPDECTLLSPSQSDLEVIETIETTV.

The segment at 201 to 250 is disordered; that stretch reads ESCDEDTEEGAELSSEEDYSPESSWEPDECTLLSPSQSDLEVIETIETTV. The segment covering 202–229 has biased composition (acidic residues); sequence SCDEDTEEGAELSSEEDYSPESSWEPDE.

The protein belongs to the UPF0524 family.

Its function is as follows. May play a role in neuronal and neurobehavioral development. The protein is UPF0524 protein C3orf70 (C3orf70) of Homo sapiens (Human).